Consider the following 435-residue polypeptide: 5-methylthioadenosine/S-adenosylhomocysteine deaminase (435 aa).

Residues His-65 and His-67 each coordinate Zn(2+). Residues Glu-94, Arg-150, and His-189 each coordinate substrate. Zn(2+) is bound at residue His-216. Residues Glu-219 and Asp-304 each contribute to the substrate site. A Zn(2+)-binding site is contributed by Asp-304.

It belongs to the metallo-dependent hydrolases superfamily. MTA/SAH deaminase family. The cofactor is Zn(2+).

The enzyme catalyses S-adenosyl-L-homocysteine + H2O + H(+) = S-inosyl-L-homocysteine + NH4(+). It carries out the reaction S-methyl-5'-thioadenosine + H2O + H(+) = S-methyl-5'-thioinosine + NH4(+). Catalyzes the deamination of 5-methylthioadenosine and S-adenosyl-L-homocysteine into 5-methylthioinosine and S-inosyl-L-homocysteine, respectively. Is also able to deaminate adenosine. The chain is 5-methylthioadenosine/S-adenosylhomocysteine deaminase from Bacillus cereus (strain G9842).